The chain runs to 121 residues: Large ribosomal subunit protein bL12 (121 aa).

This sequence belongs to the bacterial ribosomal protein bL12 family. As to quaternary structure, homodimer. Part of the ribosomal stalk of the 50S ribosomal subunit. Forms a multimeric L10(L12)X complex, where L10 forms an elongated spine to which 2 to 4 L12 dimers bind in a sequential fashion. Binds GTP-bound translation factors.

In terms of biological role, forms part of the ribosomal stalk which helps the ribosome interact with GTP-bound translation factors. Is thus essential for accurate translation. In Pseudomonas putida (strain GB-1), this protein is Large ribosomal subunit protein bL12.